The chain runs to 406 residues: MLNISKIFEEVKVMKNFTLNFGPQHPAAHGVLRLIVELESENVVRVEPHIGLLHRGTEKLIEGKTYTQALPYFDRLDYVSMNVQEHAYSLAVERLYLDSLDIELEIPQRAKVIRVLFSEITRVLNHIMATTTHAMDVGALTPFLWAFEEREKLMEFYERVSGARMHAAYIRPGGVAFDLPMNISEDIYKFVIQYRKRLEEIEDMLINNRIWKQRLVDIGIVSAEEALNYGFTGPLLRGAGIVYDIRKNYPYDDYDKYDFKIIIGEENNSYTRFIIRMKEMYQSLSIIEQALNNLRPGLIKLEGVNITAPDRAFVKKDMESCINHFKFFSEGFIIPANENYTIVEAPKGEFGIYLNANDTAKPYRCRIKAPGFLHLQGLNMMSKDHLLADVVTLIGTQDIVFGEVDR.

It belongs to the complex I 49 kDa subunit family. Complex I is composed of 45 different subunits. Component of the iron-sulfur (IP) fragment of the enzyme.

Its subcellular location is the mitochondrion inner membrane. The enzyme catalyses a ubiquinone + NADH + 5 H(+)(in) = a ubiquinol + NAD(+) + 4 H(+)(out). Its function is as follows. Core subunit of the mitochondrial membrane respiratory chain NADH dehydrogenase (Complex I) that is believed to belong to the minimal assembly required for catalysis. Complex I functions in the transfer of electrons from NADH to the respiratory chain. The immediate electron acceptor for the enzyme is believed to be ubiquinone. The chain is NADH-ubiquinone oxidoreductase 49 kDa subunit (nad7) from Dictyostelium discoideum (Social amoeba).